The primary structure comprises 204 residues: Dephospho-CoA kinase (204 aa).

One can recognise a DPCK domain in the interval 3 to 200 (VVAITGGIGS…ETYMAFASQQ (198 aa)). 11–16 (GSGKTT) is an ATP binding site.

It belongs to the CoaE family.

It is found in the cytoplasm. It catalyses the reaction 3'-dephospho-CoA + ATP = ADP + CoA + H(+). It participates in cofactor biosynthesis; coenzyme A biosynthesis; CoA from (R)-pantothenate: step 5/5. Catalyzes the phosphorylation of the 3'-hydroxyl group of dephosphocoenzyme A to form coenzyme A. The protein is Dephospho-CoA kinase of Aeromonas hydrophila.